The primary structure comprises 830 residues: DNA helicase MCM8 (830 aa).

Positions 392-599 constitute an MCM domain; sequence LLKLIVNSLC…QHDHLLSEHV (208 aa). 444 to 451 serves as a coordination point for ATP; sequence GDPGLGKS. The residue at position 620 (serine 620) is a Phosphoserine.

The protein belongs to the MCM family. In terms of assembly, component of the MCM8-MCM9 complex, which forms a hexamer composed of MCM8 and MCM9. Interacts with the DNA mismatch repair (MMR) complex composed at least of MSH2, MSH3, MSH6, PMS1 and MLH1. Interacts with RAD51; the interaction recruits RAD51 to DNA damage sites. Interacts with the MRN complex composed of MRE11, RAD50 and NBN/NBS1. Interacts with CDC6 and ORC2. Interacts with HROB; the interaction recruits the MCM8-MCM9 complex to DNA damage sites.

The protein resides in the nucleus. Its subcellular location is the chromosome. It carries out the reaction ATP + H2O = ADP + phosphate + H(+). Component of the MCM8-MCM9 complex, a complex involved in the repair of double-stranded DNA breaks (DBSs) and DNA interstrand cross-links (ICLs) by homologous recombination (HR). Required for DNA resection by the MRE11-RAD50-NBN/NBS1 (MRN) complex by recruiting the MRN complex to the repair site and by promoting the complex nuclease activity. Probably by regulating the localization of the MNR complex, indirectly regulates the recruitment of downstream effector RAD51 to DNA damage sites including DBSs and ICLs. The MCM8-MCM9 complex is dispensable for DNA replication and S phase progression. However, may play a non-essential for DNA replication: may be involved in the activation of the prereplicative complex (pre-RC) during G(1) phase by recruiting CDC6 to the origin recognition complex (ORC). Probably by regulating HR, plays a key role during gametogenesis. Stabilizes MCM9 protein. The protein is DNA helicase MCM8 (Mcm8) of Rattus norvegicus (Rat).